A 28-amino-acid chain; its full sequence is MNFQENVTLAMALFTILTSIYFFNKAQQ.

The helical transmembrane segment at 7–24 (VTLAMALFTILTSIYFFN) threads the bilayer.

The protein localises to the membrane. This chain is Small integral membrane protein 47, found in Homo sapiens (Human).